Consider the following 303-residue polypeptide: Probable 5-dehydro-4-deoxyglucarate dehydratase (303 aa).

The protein belongs to the DapA family.

It catalyses the reaction 5-dehydro-4-deoxy-D-glucarate + H(+) = 2,5-dioxopentanoate + CO2 + H2O. Its pathway is carbohydrate acid metabolism; D-glucarate degradation; 2,5-dioxopentanoate from D-glucarate: step 2/2. This Variovorax paradoxus (strain S110) protein is Probable 5-dehydro-4-deoxyglucarate dehydratase.